A 328-amino-acid chain; its full sequence is Cytochrome c biogenesis protein CcsA (328 aa).

Helical transmembrane passes span 13-33, 46-66, 73-93, 101-121, 146-166, 234-254, 263-283, and 295-315; these read ISFSVVSIVLTIYFFTLLVNL, GIVITFFGITGLLFTRWIYSG, LYESLIFLSWAFSIIHMVSYF, LNAITAPSAIFIQGFATSGLL, MILGYGALLCGSLLSIALLVI, IISLGFIFLTVGILSGAVWAN, WDPKETWAFITWTIFAIYLHI, and AIVASIGFLLIWICYFGVNLL.

The protein belongs to the CcmF/CycK/Ccl1/NrfE/CcsA family. May interact with Ccs1.

It localises to the plastid. It is found in the chloroplast thylakoid membrane. Its function is as follows. Required during biogenesis of c-type cytochromes (cytochrome c6 and cytochrome f) at the step of heme attachment. This chain is Cytochrome c biogenesis protein CcsA, found in Barbarea verna (Land cress).